The following is a 284-amino-acid chain: 4-hydroxybenzoate octaprenyltransferase (284 aa).

8 helical membrane passes run Val-14–Thr-34, Phe-41–Ile-61, Trp-93–Ile-113, Tyr-134–Tyr-154, Trp-166–Val-186, Ile-209–Glu-229, Ile-233–Leu-253, and Cys-262–Leu-282.

The protein belongs to the UbiA prenyltransferase family. It depends on Mg(2+) as a cofactor.

Its subcellular location is the cell inner membrane. The catalysed reaction is all-trans-octaprenyl diphosphate + 4-hydroxybenzoate = 4-hydroxy-3-(all-trans-octaprenyl)benzoate + diphosphate. The protein operates within cofactor biosynthesis; ubiquinone biosynthesis. Functionally, catalyzes the prenylation of para-hydroxybenzoate (PHB) with an all-trans polyprenyl group. Mediates the second step in the final reaction sequence of ubiquinone-8 (UQ-8) biosynthesis, which is the condensation of the polyisoprenoid side chain with PHB, generating the first membrane-bound Q intermediate 3-octaprenyl-4-hydroxybenzoate. The protein is 4-hydroxybenzoate octaprenyltransferase of Blochmanniella floridana.